A 727-amino-acid polypeptide reads, in one-letter code: MDSDMDYERPNVETIKCVVVGDNAVGKTRLICARACNATLTQYQLLATHVPTVWAIDQYRVCQEVLERSRDVVDDVSVSLRLWDTFGDHHKDRRFAYGRSDVVVLCFSIANPNSLHHVKTMWYPEIKHFCPRAPVILVGCQLDLRYADLEAVNRARRPLARPIKPNEILPPEKGREVAKELGIPYYETSVVAQFGIKDVFDNAIRAALISRRHLQFWKSHLRNVQRPLLQAPFLPPKPPPPIIVVPDPPSSSEECPAHLLEDPLCADVILVLQERVRIFAHKIYLSTSSSKFYDLFLMDLSEGELGGPSEPGGTHPEDHQGHSDQHHHHHHHHHGRDFLLRAASFDVCESVDEAGGSGPAGLRASTSDGILRGNGTGYLPGRGRVLSSWSRAFVSIQEEMAEDPLTYKSRLMVVVKMDSSIQPGPFRAVLKYLYTGELDENERDLMHIAHIAELLEVFDLRMMVANILNNEAFMNQEITKAFHVRRTNRVKECLAKGTFSDVTFILDDGTISAHKPLLISSCDWMAAMFGGPFVESSTREVVFPYTSKSCMRAVLEYLYTGMFTSSPDLDDMKLIILANRLCLPHLVALTEQYTVTGLMEATQMMVDIDGDVLVFLELAQFHCAYQLADWCLHHICTNYNNVCRKFPRDMKAMSPENQEYFEKHRWPPVWYLKEEDHYQRARKEREKEDYLHLKRQPKRRWLFWNSPSSPSSSAASSSSPSSSSAVV.

A rho-like region spans residues 1 to 210; it reads MDSDMDYERP…DNAIRAALIS (210 aa). GTP is bound by residues 21–28, 84–88, and 140–143; these read GDNAVGKT, DTFGD, and CQLD. BTB domains follow at residues 266–442 and 500–567; these read ADVI…DENE and SDVT…TSSP. The segment at 304–333 is disordered; the sequence is ELGGPSEPGGTHPEDHQGHSDQHHHHHHHH. Over residues 315-324 the composition is skewed to basic and acidic residues; the sequence is HPEDHQGHSD. Positions 703–727 are disordered; it reads FWNSPSSPSSSAASSSSPSSSSAVV. Residues 706–727 are compositionally biased toward low complexity; sequence SPSSPSSSAASSSSPSSSSAVV.

This sequence belongs to the small GTPase superfamily. Rho family. As to quaternary structure, interacts with HSP90AA1 and HSP90AB1. Forms a complex with CUL3 and RBX1. Interacts (via BTB 1 domain) with CUL3. Interacts with MSI2. Post-translationally, autoubiquitinated by RHOBTB2-CUL3-RBX1 ubiquitin ligase complex. As to expression, ubiquitous, with highest levels in neural tissues. Expression is also detected in fetal lung, heart, and brain.

In terms of biological role, regulator of cell proliferation and apoptosis. It likely functions as a substrate-adapter that recruits key substrates, e.g. MSI2, to CUL3-based ubiquitin ligase complexes for degradation. Required for MSI2 ubiquitination and degradation. In Homo sapiens (Human), this protein is Rho-related BTB domain-containing protein 2 (RHOBTB2).